The sequence spans 621 residues: MSVDISNFPNLALADTPVELRSLPFERLPVLCNELREYLLRSVSRSSGHLASGLGTVELTVALHYVYNTPFDRLVWDVGHQAYPHKILTGRRDRMQSIRQKDGLHPFPWRGESEYDVLSVGHSSTSIGAALGMAVAAESEGLGRKVVAVIGDGAITAGMAFEALNHAGDVHKDMLVVLNDNEMSISENVGALNNHLARIMSGKLYTTIREGGKKVLAGLPPVKELAKRAEEHLKGMVVPGTLFEEFGFNYIGPIDGHDINALVETLRNMRNLKGPQLLHVKTKKGKGYEPAEKDPIGYHGVPKFNPDECTLPKASGGKPSFSAIFGQWLCDMAAKDERLVGITPAMREGSGLVKFSQQYPDRYFDVAIAEQHAVTFAAGLAIADQKPVVAIYSSFLQRAYDQLIHDVALQELPVLFAIDRAGLVGADGPTHQGAFDISFLRTVPNMVIMTPSDENECRQMLYTGYQCNGPAAVRYPRGSGTGIQVESEMQALALGKGRIVRQGKGTAILAFGTLLQQAKAAAEALDATLVDMRFVKPMDEALVFSLAATHDQFVTLEDNAIMGGAGSAVNELLMRSKQCKPVLNLGLPDRFVEQGTQEEIYALLGLDGTGIQRSIEQWLQA.

Residues His80 and 121–123 (GHS) contribute to the thiamine diphosphate site. Residue Asp152 coordinates Mg(2+). Thiamine diphosphate contacts are provided by residues 153 to 154 (GA), Asn181, Tyr288, and Glu370. Asn181 serves as a coordination point for Mg(2+).

This sequence belongs to the transketolase family. DXPS subfamily. In terms of assembly, homodimer. It depends on Mg(2+) as a cofactor. Thiamine diphosphate serves as cofactor.

The catalysed reaction is D-glyceraldehyde 3-phosphate + pyruvate + H(+) = 1-deoxy-D-xylulose 5-phosphate + CO2. The protein operates within metabolic intermediate biosynthesis; 1-deoxy-D-xylulose 5-phosphate biosynthesis; 1-deoxy-D-xylulose 5-phosphate from D-glyceraldehyde 3-phosphate and pyruvate: step 1/1. Functionally, catalyzes the acyloin condensation reaction between C atoms 2 and 3 of pyruvate and glyceraldehyde 3-phosphate to yield 1-deoxy-D-xylulose-5-phosphate (DXP). In Aeromonas hydrophila subsp. hydrophila (strain ATCC 7966 / DSM 30187 / BCRC 13018 / CCUG 14551 / JCM 1027 / KCTC 2358 / NCIMB 9240 / NCTC 8049), this protein is 1-deoxy-D-xylulose-5-phosphate synthase.